A 673-amino-acid polypeptide reads, in one-letter code: Forkhead box protein O3 (673 aa).

Positions 1 to 153 are disordered; sequence MAEAPASPAP…SGQPRKCSSR (153 aa). At Ser30 the chain carries Phosphoserine; by AMPK. Thr32 is subject to Phosphothreonine; by PKB/AKT1. Lys46 carries the N6-methyllysine modification. A compositionally biased stretch (acidic residues) spans 57–68; the sequence is IPEEEDDEDDED. Residues 79-89 show a composition bias toward gly residues; that stretch reads IGGGGGSGTLG. The tract at residues 80 to 108 is required for mitochondrial import; sequence GGGGGSGTLGSGLLLEDSARVLAPGGQDP. The residue at position 149 (Lys149) is an N6-methyllysine. The segment at residues 157 to 251 is a DNA-binding region (fork-head); that stretch reads WGNLSYADLI…KSGKAPRRRA (95 aa). Residue Thr179 is modified to Phosphothreonine; by AMPK. Residue Ser209 is modified to Phosphoserine; by STK4/MST1. Phosphoserine; by MAPKAPK5 is present on Ser215. The residue at position 230 (Lys230) is an N6-methyllysine. The tract at residues 231 to 302 is disordered; it reads SSWWIINPDG…GSPTSRSSDE (72 aa). Lys242 bears the N6-acetyllysine mark. Positions 242-259 match the Nuclear localization signal motif; that stretch reads KSGKAPRRRAVSMDNSNK. Ser253 carries the post-translational modification Phosphoserine; by PKB/AKT1 and MAPKAPK5. A compositionally biased stretch (basic residues) spans 261–272; sequence TKSRGRAAKKKA. Lys262 and Lys271 each carry N6-methyllysine. 2 positions are modified to phosphoserine: Ser280 and Ser284. The span at 283–298 shows a compositional bias: polar residues; it reads DSPSQLSKWPGSPTSR. At Lys290 the chain carries N6-methyllysine. Ser294 is modified (phosphoserine). Ser299 is modified (phosphoserine; by CaMK2A). The tract at residues 300–673 is mediates interaction with CHUK/IKKA and IKBKB/IKKB; that stretch reads SDELDAWTDF…QASSQSWVPG (374 aa). Phosphoserine is present on Ser311. Residue Ser315 is modified to Phosphoserine; by SGK1. A phosphoserine; by AMPK mark is found at Ser399 and Ser413. N6-methyllysine is present on Lys419. Residue Ser421 is modified to Phosphoserine. A disordered region spans residues 536–587; that stretch reads HQHQTQGALGGSRALSNSVSNMGLSESSSLGSAKHQQQSPVSQSMQTLSDSL. Polar residues predominate over residues 549 to 582; that stretch reads ALSNSVSNMGLSESSSLGSAKHQQQSPVSQSMQT. Ser551 is subject to Phosphoserine; by MAPKAPK5. Position 555 is a phosphoserine; by AMPK and MAPKAPK5 (Ser555). Residues Ser588 and Ser626 each carry the phosphoserine; by AMPK modification. Position 644 is a phosphoserine; by IKKB (Ser644).

Upon metabolic stress, forms a complex composed of FOXO3, SIRT3 and mitochondrial RNA polymerase POLRMT; the complex is recruited to mtDNA in a SIRT3-dependent manner. Also forms a complex composed of FOXO3, SIRT3, TFAM and POLRMT. Interacts with SIRT2; the interaction occurs independently of SIRT2 deacetylase activity. Interacts with YWHAB/14-3-3-beta and YWHAZ/14-3-3-zeta, which are required for cytosolic sequestration. Upon oxidative stress, interacts with STK4/MST1, which disrupts interaction with YWHAB/14-3-3-beta and leads to nuclear translocation. Interacts with PIM1. Interacts with DDIT3/CHOP. Interacts (deacetylated form) with SKP2. Interacts with CHUK and IKBKB. Interacts with CAMK2A, CAMK2B and calcineurin A. Interacts with NUPR1; this interaction represses FOXO3 transactivation. Post-translationally, in the presence of survival factors such as IGF1, phosphorylated on Thr-32 and Ser-253 by AKT1/PKB. This phosphorylated form then interacts with 14-3-3 proteins and is retained in the cytoplasm. Survival factor withdrawal induces dephosphorylation and promotes translocation to the nucleus where the dephosphorylated protein induces transcription of target genes and triggers apoptosis. Although AKT1/PKB doesn't appear to phosphorylate Ser-315 directly, it may activate other kinases that trigger phosphorylation at this residue. Phosphorylated by STK4/MST1 on Ser-209 upon oxidative stress, which leads to dissociation from YWHAB/14-3-3-beta and nuclear translocation. Phosphorylated by PIM1. Phosphorylation by AMPK leads to the activation of transcriptional activity without affecting subcellular localization. In response to metabolic stress, phosphorylated by AMPK on Ser-30 which mediates FOXO3 mitochondrial translocation. Phosphorylation by MAPKAPK5 promotes nuclear localization and DNA-binding, leading to induction of miR-34b and miR-34c expression, 2 post-transcriptional regulators of MYC that bind to the 3'UTR of MYC transcript and prevent its translation. Phosphorylated by CHUK/IKKA and IKBKB/IKKB. TNF-induced inactivation of FOXO3 requires its phosphorylation at Ser-644 by IKBKB/IKKB which promotes FOXO3 retention in the cytoplasm, polyubiquitination and ubiquitin-mediated proteasomal degradation. May be dephosphorylated by calcineurin A on Ser-299 which abolishes FOXO3 transcriptional activity. In cancer cells, ERK mediated-phosphorylation of Ser-12 is required for mitochondrial translocation of FOXO3 in response to metabolic stress or chemotherapeutic agents. Phosphorylation at Ser-253 promotes its degradation by the proteasome. Dephosphorylation at Ser-253 by protein phosphatase 2A (PPP2CA) promotes its stabilization; interaction with PPP2CA is enhanced by AMBRA1. Deacetylation by SIRT1 or SIRT2 stimulates interaction of FOXO3 with SKP2 and facilitates SCF(SKP2)-mediated FOXO3 ubiquitination and proteasomal degradation. Deacetylation by SIRT2 stimulates FOXO3-mediated transcriptional activity in response to oxidative stress. Deacetylated by SIRT3. Deacetylation by SIRT3 stimulates FOXO3-mediated mtDNA transcriptional activity in response to metabolic stress. In terms of processing, heavily methylated by SET9 which decreases stability, while moderately increasing transcriptional activity. The main methylation site is Lys-271. Methylation doesn't affect subcellular location. Post-translationally, polyubiquitinated. Ubiquitinated by a SCF complex containing SKP2, leading to proteasomal degradation. The N-terminus is cleaved following import into the mitochondrion. Ubiquitous.

It is found in the cytoplasm. The protein resides in the cytosol. Its subcellular location is the nucleus. The protein localises to the mitochondrion matrix. It localises to the mitochondrion outer membrane. Functionally, transcriptional activator that recognizes and binds to the DNA sequence 5'-[AG]TAAA[TC]A-3' and regulates different processes, such as apoptosis and autophagy. Acts as a positive regulator of autophagy in skeletal muscle: in starved cells, enters the nucleus following dephosphorylation and binds the promoters of autophagy genes, such as GABARAP1L, MAP1LC3B and ATG12, thereby activating their expression, resulting in proteolysis of skeletal muscle proteins. Triggers apoptosis in the absence of survival factors, including neuronal cell death upon oxidative stress. Participates in post-transcriptional regulation of MYC: following phosphorylation by MAPKAPK5, promotes induction of miR-34b and miR-34c expression, 2 post-transcriptional regulators of MYC that bind to the 3'UTR of MYC transcript and prevent its translation. In response to metabolic stress, translocates into the mitochondria where it promotes mtDNA transcription. In response to metabolic stress, translocates into the mitochondria where it promotes mtDNA transcription. Also acts as a key regulator of chondrogenic commitment of skeletal progenitor cells in response to lipid availability: when lipids levels are low, translocates to the nucleus and promotes expression of SOX9, which induces chondrogenic commitment and suppresses fatty acid oxidation. Also acts as a key regulator of regulatory T-cells (Treg) differentiation by activating expression of FOXP3. This is Forkhead box protein O3 from Homo sapiens (Human).